The following is a 519-amino-acid chain: Cell adhesion molecule CEACAM1 (519 aa).

Positions 1 to 34 (MELASARLLRGQIPWRGLLLTASLLTYWSPLTTA) are cleaved as a signal peptide. A Pyrrolidone carboxylic acid modification is found at glutamine 35. Residues 35–425 (QVTVDAVPPN…QGNSGLSEGA (391 aa)) are Extracellular-facing. A required for homophilic binding region spans residues 39-142 (DAVPPNVVEE…QTSVQFRVYP (104 aa)). The Ig-like V-type domain occupies 42–140 (PPNVVEEKSV…PIQTSVQFRV (99 aa)). N-linked (GlcNAc...) asparagine glycosylation is found at asparagine 87, asparagine 104, asparagine 113, asparagine 148, asparagine 152, asparagine 173, asparagine 197, asparagine 224, asparagine 256, asparagine 288, asparagine 292, asparagine 302, asparagine 315, and asparagine 331. Ig-like C2-type domains follow at residues 147-232 (PNVT…FNLD), 237-317 (PDAP…KNIT), and 325-403 (PSIQ…FRIS). A disulfide bridge links cysteine 167 with cysteine 215. A disulfide bridge connects residues cysteine 259 and cysteine 299. Cysteine 344 and cysteine 392 are oxidised to a cystine. A glycan (N-linked (GlcNAc...) asparagine; atypical) is linked at asparagine 374. A helical membrane pass occupies residues 426–446 (IAGIVIGSVAGVALIAALAYF). An interaction with calmodulin region spans residues 445–457 (YFLYSRKTGGGSD). At 447-519 (LYSRKTGGGS…ETVYSVVKKK (73 aa)) the chain is on the cytoplasmic side. Positions 447 to 519 (LYSRKTGGGS…ETVYSVVKKK (73 aa)) are interaction with FLNA. Residues 455–519 (GSDHRDLTEH…ETVYSVVKKK (65 aa)) are disordered. The span at 456–466 (SDHRDLTEHKP) shows a compositional bias: basic and acidic residues. The interval 484–519 (DDVSYSVLNFNAQQSKRPTSASSSPTETVYSVVKKK) is required for interaction with PTPN11 and PTPN6 and for control of phosphorylation level. A Phosphotyrosine; by SRC, LCK, INSR and EGFR modification is found at tyrosine 488. The span at 489–512 (SVLNFNAQQSKRPTSASSSPTETV) shows a compositional bias: polar residues. At serine 503 the chain carries Phosphoserine. Phosphotyrosine; by INSR, SRC and LCK is present on tyrosine 513. An essential for interaction with PTPN11 and PTPN6 region spans residues 513 to 516 (YSVV).

This sequence belongs to the immunoglobulin superfamily. CEA family. Monomer. Oligomer. Heterodimer. Homodimer. Cis-dimer/oligomer (via Ig-like C2-type and/or via cytoplasmic domains); induced by trans-homophilic cell adhesion through an allosteric mechanism transmitted by the Ig-like V-type domain, and is regulated by intracellular calcium and calmodulin. Interacts (via cytoplasmic domain) with calmodulin in a calcium dependent manner; reduces homophilic cell adhesion through dissociation of dimer. Isoform 1 interacts (via cytoplasmic domain) with PTPN11 (preferentially) and PTPN6; cis-homodimer form is preferred; this interaction is decreased by formation of isoform 1 / isoform 2 cis-heterodimers and is dependent on the monomer/dimer equilibrium; this interaction is phosphorylation-dependent. Isoform 1 interacts with LYN. Isoform 1 interacts (via cytoplasmic domain) with SRC (via SH2 domain); this interaction is regulated by trans-homophilic cell adhesion. Isoform 1 interacts (via cytoplasmic domain) with LCK; mediates phosphorylation at Tyr-488 and Tyr-513 resulting in PTPN6 association. Isoform 1 interacts with PTPN6; this interaction is phosphorylation-dependent and causes a profound decrease in TCR stimulation-induced CD247 and ZAP70 phosphorylation. Isoform 1 interacts with TCR/CD3 complex through TCR beta chain and CD3E; colocalizes at the cell surface and upon stimulation of the TCR/CD3 complex recruits PTPN6 in the TCR/CD3 complex, resulting in dephosphorylation of CD247 and ZAP70. Isoform 1 interacts (via cytoplasmic domain) with SHC1 (via SH2 domain); SHC1 mediates interaction with INSR or EGFR in a Ser-503 phosphorylation-dependent manner. Isoform 1 interacts with EGFR; the interaction is indirect. Isoform 1 interacts with CSF3R; down-regulates the CSF3R-STAT3 pathway through recruitment of PTPN6 that dephosphorylates CSF3R. Isoform 1 (phosphorylated form) interacts with TLR4 and SYK; recruits PTPN6 that dephosphorylates SYK, reducing the production of reactive oxygen species (ROS) and lysosome disruption, leading to a reduction of the inflammasome activity. Isoform 1 interacts with FLNA; inhibits cell migration and cell scattering by interfering with the interaction of FLNA with RALA. Isoform 1 interacts (via cytoplasmic domain) with PXN; the interaction is phosphotyrosyl-dependent. Isoform 1 interacts with KLRK1; recruits PTPN6 that dephosphorylates VAV1. Isoform 1 interacts with CEACAM8. Isoform 1 interacts with FASN; this interaction is insulin and phosphorylation-dependent; reduces fatty-acid synthase activity. Interacts (via Ig-like V-type) with HAVCR2 (via Ig-like V-type); facilitates the maturation and cell surface expression of HAVCR2 thereby regulating T-cell tolerance induction. Isoform 2 interacts (via the cytoplasmic domain) with ANXA2; this interaction is regulated by phosphorylation and appears in the AIIt complex. Interacts (via Lewis X moieties) with CD209 (via C-type lectin domain); this interaction is regulated by the glycosylation pattern of CEACAM1 on cell types and regulates contact between dendritic cells and neutrophils. In terms of processing, phosphorylated on serine and tyrosine. Isoform 1 is phosphorylated on tyrosine by Src family kinases like SRC and LCK and by receptor like CSF3R, EGFR and INSR upon stimulation. Phosphorylated at Ser-503; mediates activity. Phosphorylated at Tyr-488; regulates activity. Phosphorylated at Tyr-488 by EGFR and INSR upon stimulation; this phosphorylation is Ser-503-phosphorylation-dependent; mediates cellular internalization; increases interaction with FASN. Phosphorylated at Tyr-488 and Tyr-513 by LCK; mediates PTPN6 association and is regulated by homophilic ligation of CEACAM1 in the absence of T-cell activation. Phosphorylated at Tyr-513; mediates interaction with PTPN11. Phosphorylated on serine and threonine. In terms of tissue distribution, expressed in epithelia, vessel endothelia, leukocytes and platelets. Isoform 1 and isoform 2 are highly expressed in liver and intestine, moderately in lung, and weakly in muscle, kidney, and spleen. Expressed in granulocytes, lymphocytes, granulocytes, B cells, and T-cells.

It is found in the cell membrane. It localises to the lateral cell membrane. Its subcellular location is the apical cell membrane. The protein localises to the basal cell membrane. The protein resides in the cell junction. It is found in the adherens junction. It localises to the cytoplasmic vesicle. Its subcellular location is the secretory vesicle. The protein localises to the cell projection. The protein resides in the microvillus membrane. Cell adhesion protein that mediates homophilic cell adhesion in a calcium-independent manner. Plays a role as coinhibitory receptor in immune response, insulin action and also functions as an activator during angiogenesis. Its coinhibitory receptor function is phosphorylation- and PTPN6 -dependent, which in turn, suppress signal transduction of associated receptors by dephosphorylation of their downstream effectors. Plays a role in immune response, of T-cells, natural killer (NK) and neutrophils. Upon TCR/CD3 complex stimulation, inhibits TCR-mediated cytotoxicity by blocking granule exocytosis by mediating homophilic binding to adjacent cells, allowing interaction with and phosphorylation by LCK and interaction with the TCR/CD3 complex which recruits PTPN6 resulting in dephosphorylation of CD247 and ZAP70. Also inhibits T-cell proliferation and cytokine production through inhibition of JNK cascade and plays a crucial role in regulating autoimmunity and anti-tumor immunity by inhibiting T-cell through its interaction with HAVCR2. Upon natural killer (NK) cells activation, inhibit KLRK1-mediated cytolysis of CEACAM1-bearing tumor cells by trans-homophilic interactions with CEACAM1 on the target cell and lead to cis-interaction between CEACAM1 and KLRK1, allowing PTPN6 recruitment and then VAV1 dephosphorylation. Upon neutrophils activation negatively regulates IL1B production by recruiting PTPN6 to a SYK-TLR4-CEACAM1 complex, that dephosphorylates SYK, reducing the production of reactive oxygen species (ROS) and lysosome disruption, which in turn, reduces the activity of the inflammasome. Down-regulates neutrophil production by acting as a coinhibitory receptor for CSF3R by downregulating the CSF3R-STAT3 pathway through recruitment of PTPN6 that dephosphorylates CSF3R. Also regulates insulin action by promoting INS clearance and regulating lipogenesis in liver through regulating insulin signaling. Upon INS stimulation, undergoes phosphorylation by INSR leading to INS clearance by increasing receptor-mediated insulin endocytosis. This inernalization promotes interaction with FASN leading to receptor-mediated insulin degradation and to reduction of FASN activity leading to negative regulation of fatty acid synthesis. INSR-mediated phosphorylation also provokes a down-regulation of cell proliferation through SHC1 interaction resulting in decrease coupling of SHC1 to the MAPK3/ERK1-MAPK1/ERK2 and phosphatidylinositol 3-kinase pathways. Functions as activator in angiogenesis by promoting blood vessel remodeling through endothelial cell differentiation and migration and in arteriogenesis by increasing the number of collateral arteries and collateral vessel calibers after ischemia. Also regulates vascular permeability through the VEGFR2 signaling pathway resulting in control of nitric oxide production. Down-regulates cell growth in response to EGF through its interaction with SHC1 that mediates interaction with EGFR resulting in decrease coupling of SHC1 to the MAPK3/ERK1-MAPK1/ERK2 pathway. Negatively regulates platelet aggregation by decreasing platelet adhesion on type I collagen through the GPVI-FcRgamma complex. Inhibits cell migration and cell scattering through interaction with FLNA; interferes with the interaction of FLNA with RALA. Mediates bile acid transport activity in a phosphorylation dependent manner. Negatively regulates osteoclastogenesis. In terms of biological role, cell adhesion proteins that mediates homophilic cell adhesion in a calcium-independent manner. Promotes populations of T-cells regulating IgA production and secretion associated with control of the commensal microbiota and resistance to enteropathogens. This Rattus norvegicus (Rat) protein is Cell adhesion molecule CEACAM1.